We begin with the raw amino-acid sequence, 289 residues long: Formamidopyrimidine-DNA glycosylase 1 (289 aa).

Pro2 serves as the catalytic Schiff-base intermediate with DNA. Glu3 functions as the Proton donor in the catalytic mechanism. Catalysis depends on Lys61, which acts as the Proton donor; for beta-elimination activity. DNA is bound by residues His100, Arg119, and Lys165. The FPG-type zinc finger occupies 251–285; that stretch reads DAYGREGENCRRCGAVIRRERFMNRSSFYCPRCQP. Arg275 (proton donor; for delta-elimination activity) is an active-site residue.

This sequence belongs to the FPG family. Monomer. Zn(2+) serves as cofactor.

The enzyme catalyses Hydrolysis of DNA containing ring-opened 7-methylguanine residues, releasing 2,6-diamino-4-hydroxy-5-(N-methyl)formamidopyrimidine.. It catalyses the reaction 2'-deoxyribonucleotide-(2'-deoxyribose 5'-phosphate)-2'-deoxyribonucleotide-DNA = a 3'-end 2'-deoxyribonucleotide-(2,3-dehydro-2,3-deoxyribose 5'-phosphate)-DNA + a 5'-end 5'-phospho-2'-deoxyribonucleoside-DNA + H(+). Its function is as follows. Involved in base excision repair of DNA damaged by oxidation or by mutagenic agents. Acts as a DNA glycosylase that recognizes and removes damaged bases. Has a preference for oxidized purines, such as 7,8-dihydro-8-oxoguanine (8-oxoG) when paired with C, G or T, as well as methyl-faPy (formanidopyrimidine residues) in poly(dG-dC) and spiroiminodihydantoin:C base pairs. Unlike its E.coli ortholog has no activity on 8-oxoG:A. Has AP (apurinic/apyrimidinic) lyase activity and introduces nicks in the DNA strand. Cleaves the DNA backbone by beta-delta elimination to generate a single-strand break at the site of the removed base with both 3'- and 5'-phosphates. Cleaves ssDNA containing an AP site. Complements the H(2)O(2) sensitivity of an M.smegmatis fpg disruption mutant; upon expression in M.smegmatis excises 8-oxoG from dsDNA. The sequence is that of Formamidopyrimidine-DNA glycosylase 1 (fpg1) from Mycobacterium tuberculosis (strain ATCC 25618 / H37Rv).